The sequence spans 88 residues: MSVFILFYLWIVPIVIGILCSVAAHKSKGKMRVAPGIAMIVLSIISLITAFTAGHTNFHVFIGGMFLFGTFLVGSAFPFFFGLKKKEK.

A run of 3 helical transmembrane segments spans residues 3-23 (VFILFYLWIVPIVIGILCSVA), 33-53 (VAPGIAMIVLSIISLITAFTA), and 61-81 (FIGGMFLFGTFLVGSAFPFFF).

The protein resides in the cell membrane. This is an uncharacterized protein from Bacillus subtilis (strain 168).